Consider the following 914-residue polypeptide: Solute carrier family 12 member 9 (914 aa).

Topologically, residues 1 to 36 (MASENSPLLAYRLLGEEGAAFPPNGAGGSGVASARK) are cytoplasmic. S6 is modified (phosphoserine). A helical membrane pass occupies residues 37–57 (LSTFLGVVVPTVLSMFSIVVF). Residues 58-72 (LRIGFVVGHAGLLQA) lie on the Extracellular side of the membrane. A helical transmembrane segment spans residues 73–93 (LAMLLVAYVILALTVLSVCAI). Topologically, residues 94–119 (ATNGAVRGGGAYFMISRTLGPEVGGS) are cytoplasmic. Residues 120–140 (IGLMFYLANVCGCAVSLLGLV) form a helical membrane-spanning segment. The Extracellular segment spans residues 141–167 (ESILDVFGADVTGSSGIKVLPQGYGWN). The chain crosses the membrane as a helical span at residues 168-188 (LLYGSLLLGLVGGVCALGAGL). Over 189 to 193 (YARAS) the chain is Cytoplasmic. The chain crosses the membrane as a helical span at residues 194-214 (FLTFLLVSGSLASVLVSFVAV). The Extracellular portion of the chain corresponds to 215-262 (GPRNITLAPRPGTNGSSVPPRHGHFTGFNGSTLKDNLGAGYAEDYTTG). N218, N228, and N243 each carry an N-linked (GlcNAc...) asparagine glycan. A helical membrane pass occupies residues 263 to 283 (AMMTFASVFAVLFNGCTGIMA). The Cytoplasmic segment spans residues 284–297 (GANMSGELKDPSRA). A helical membrane pass occupies residues 298 to 318 (IPLGTIIAVAYTFFIYILLFF). Residues 319–338 (LSSFTCDRALLQGDYGFFRD) are Extracellular-facing. The chain crosses the membrane as a helical span at residues 339-359 (ISLWPPLVLIGIYATALSASM). The Cytoplasmic portion of the chain corresponds to 360–376 (SSLIGASRILHALAQDD). A helical transmembrane segment spans residues 377 to 399 (LFGVILAPAKVVSGGGNPWGAVL). Topologically, residues 400–416 (YSWGLVQLVLLAGKLNT) are extracellular. The helical transmembrane segment at 417-437 (LAAVVTVFYLVAYAAVDLSCL) threads the bilayer. Residues 438–466 (SLEWASAPNFRPTFSLFSWHTCLLGVASC) are Cytoplasmic-facing. Residues 467–487 (LLMMFLISPGAAGGSLLLMGL) traverse the membrane as a helical segment. The Extracellular portion of the chain corresponds to 488–740 (LSALLTARGG…LLRPRGGPGY (253 aa)). The disordered stretch occupies residues 645-678 (PAFSEPAEGTREGGSPALSTLFPPPRAPGSPRAL). A helical membrane pass occupies residues 741–761 (VDVCGLFLLQMATILSMVPAW). Residues 762–914 (HSARLRIFLC…GVTPVTCTDL (153 aa)) are Cytoplasmic-facing. A disordered region spans residues 843 to 864 (QQGRGTGGGPGGPEGRDGEEGP). The segment covering 846 to 855 (RGTGGGPGGP) has biased composition (gly residues).

This sequence belongs to the SLC12A transporter family. Interacts with SLC12A1.

Its subcellular location is the cell membrane. The protein resides in the lysosome membrane. May be an inhibitor of SLC12A1. Seems to correspond to a subunit of a multimeric transport system and thus, additional subunits may be required for its function. May play a role in lysosomal ion flux and osmoregulation. In Rattus norvegicus (Rat), this protein is Solute carrier family 12 member 9 (Slc12a9).